Here is a 472-residue protein sequence, read N- to C-terminus: ATP-dependent rRNA helicase rrp3 (472 aa).

A disordered region spans residues 1 to 51 (MPDVKKRKIAHEAPEHGSDAESTSSHESVAQQDDTAETQDEAAATETRPAP). Residues 10 to 19 (AHEAPEHGSD) are compositionally biased toward basic and acidic residues. Positions 20–29 (AESTSSHESV) are enriched in polar residues. The short motif at 52-80 (KSFKDLGIIDQLCEACETMGYKAPTPIQA) is the Q motif element. A Helicase ATP-binding domain is found at 83-254 (IPLALQGRDL…RASLSNPLRV (172 aa)). Residue 96-103 (AETGSGKT) participates in ATP binding. Residues 202-205 (DEAD) carry the DEAD box motif. The region spanning 282-426 (YLVYLLNEFV…EYELEKDEVM (145 aa)) is the Helicase C-terminal domain. The tract at residues 451–472 (GTKAKKFGKGKRSRDEMDQEEG) is disordered. The span at 452 to 462 (TKAKKFGKGKR) shows a compositional bias: basic residues.

Belongs to the DEAD box helicase family. DDX47/RRP3 subfamily. Interacts with the SSU processome.

The protein localises to the nucleus. The catalysed reaction is ATP + H2O = ADP + phosphate + H(+). In terms of biological role, ATP-dependent rRNA helicase required for pre-ribosomal RNA processing. Involved in the maturation of the 35S-pre-rRNA and to its cleavage to mature 18S rRNA. The protein is ATP-dependent rRNA helicase rrp3 of Neosartorya fischeri (strain ATCC 1020 / DSM 3700 / CBS 544.65 / FGSC A1164 / JCM 1740 / NRRL 181 / WB 181) (Aspergillus fischerianus).